The sequence spans 349 residues: Peroxidase 7 (349 aa).

Residues 1–22 (MKLAVVSVVVILGVLVAWPVSA) form the signal peptide. 4 cysteine pairs are disulfide-bonded: cysteine 60-cysteine 136, cysteine 93-cysteine 98, cysteine 142-cysteine 341, and cysteine 220-cysteine 252. The Proton acceptor role is filled by histidine 91. Residues aspartate 92, valine 95, glycine 97, aspartate 99, and serine 101 each coordinate Ca(2+). Residue proline 183 participates in substrate binding. Heme b is bound at residue histidine 213. Position 214 (threonine 214) interacts with Ca(2+). Residue asparagine 231 is glycosylated (N-linked (GlcNAc...) asparagine). The Ca(2+) site is built by aspartate 262, threonine 265, and aspartate 270.

It belongs to the peroxidase family. Classical plant (class III) peroxidase subfamily. Requires heme b as cofactor. It depends on Ca(2+) as a cofactor.

The protein resides in the secreted. It catalyses the reaction 2 a phenolic donor + H2O2 = 2 a phenolic radical donor + 2 H2O. Its function is as follows. Removal of H(2)O(2), oxidation of toxic reductants, biosynthesis and degradation of lignin, suberization, auxin catabolism, response to environmental stresses such as wounding, pathogen attack and oxidative stress. These functions might be dependent on each isozyme/isoform in each plant tissue. This Arabidopsis thaliana (Mouse-ear cress) protein is Peroxidase 7 (PER7).